A 160-amino-acid chain; its full sequence is Small ribosomal subunit protein bS16 (160 aa).

Residues 115–139 are disordered; sequence GGPTTEATRPKKKVSAKKAAKAVES. Basic residues predominate over residues 124-134; it reads PKKKVSAKKAA.

It belongs to the bacterial ribosomal protein bS16 family.

This Mycobacterium leprae (strain Br4923) protein is Small ribosomal subunit protein bS16.